A 237-amino-acid polypeptide reads, in one-letter code: LexA repressor (237 aa).

The H-T-H motif DNA-binding region spans 26–46 (FDEMKDALDLRSKSGIHRLIT). Catalysis depends on for autocatalytic cleavage activity residues Ser-158 and Lys-196.

Belongs to the peptidase S24 family. In terms of assembly, homodimer.

It catalyses the reaction Hydrolysis of Ala-|-Gly bond in repressor LexA.. Functionally, represses a number of genes involved in the response to DNA damage (SOS response), including recA and lexA. In the presence of single-stranded DNA, RecA interacts with LexA causing an autocatalytic cleavage which disrupts the DNA-binding part of LexA, leading to derepression of the SOS regulon and eventually DNA repair. The chain is LexA repressor from Rhodopseudomonas palustris (strain BisA53).